Consider the following 102-residue polypeptide: Urease subunit beta (102 aa).

This sequence belongs to the urease beta subunit family. As to quaternary structure, heterotrimer of UreA (gamma), UreB (beta) and UreC (alpha) subunits. Three heterotrimers associate to form the active enzyme.

The protein resides in the cytoplasm. The enzyme catalyses urea + 2 H2O + H(+) = hydrogencarbonate + 2 NH4(+). Its pathway is nitrogen metabolism; urea degradation; CO(2) and NH(3) from urea (urease route): step 1/1. The protein is Urease subunit beta of Alteromonas mediterranea (strain DSM 17117 / CIP 110805 / LMG 28347 / Deep ecotype).